A 973-amino-acid polypeptide reads, in one-letter code: GATOR2 complex protein WDR59 (973 aa).

WD repeat units lie at residues 57–98 (QSKW…GEVC), 103–143 (GHTR…KPTV), 146–185 (SAVA…TAVE), 189–229 (AHLS…KYLN), 232–276 (PCQV…TPVH), and 280–324 (GHDD…QRLC). The segment at 346–365 (DKALQPQDSEPQHSSGHGDE) is disordered. The span at 351-360 (PQDSEPQHSS) shows a compositional bias: polar residues. Positions 393–494 (QEFSLINVQI…RQLVSWLESV (102 aa)) constitute an RWD domain. A C4-type zinc finger spans residues 900–920 (YCSHCRSEARGTQCAICKGFT). Residues C901, C904, C913, C916, C926, C937, H942, H945, H948, C959, C963, C965, and C967 each coordinate Zn(2+). The segment at 921 to 970 (FQCAICHVAVRGSSNFCLTCGHGGHTSHMMEWFRTQEVCPTGCGCHCLLE) adopts an RING-type; atypical zinc-finger fold.

This sequence belongs to the WD repeat WDR59 family. In terms of assembly, component of the GATOR2 subcomplex, composed of MIOS, SEC13, SEH1L, WDR24 and WDR59. The GATOR2 complex interacts with CASTOR1 and CASTOR2; the interaction is negatively regulated by arginine. The GATOR2 complex interacts with SESN1, SESN2 and SESN3; the interaction is negatively regulated by amino acids. Interacts with DDB1-CUL4A/B E3 ligase complexes.

The protein resides in the lysosome membrane. With respect to regulation, the GATOR2 complex is negatively regulated by the upstream amino acid sensors CASTOR1 and SESN2, which sequester the GATOR2 complex in absence of amino acids. In the presence of abundant amino acids, GATOR2 is released from CASTOR1 and SESN2 and activated. Its function is as follows. As a component of the GATOR2 complex, functions as an activator of the amino acid-sensing branch of the mTORC1 signaling pathway. The GATOR2 complex indirectly activates mTORC1 through the inhibition of the GATOR1 subcomplex. GATOR2 probably acts as an E3 ubiquitin-protein ligase toward GATOR1. In the presence of abundant amino acids, the GATOR2 complex mediates ubiquitination of the NPRL2 core component of the GATOR1 complex, leading to GATOR1 inactivation. In the absence of amino acids, GATOR2 is inhibited, activating the GATOR1 complex. The sequence is that of GATOR2 complex protein WDR59 from Gallus gallus (Chicken).